A 128-amino-acid polypeptide reads, in one-letter code: Small ribosomal subunit protein uS11 (128 aa).

It belongs to the universal ribosomal protein uS11 family. Part of the 30S ribosomal subunit. Interacts with proteins S7 and S18. Binds to IF-3.

Located on the platform of the 30S subunit, it bridges several disparate RNA helices of the 16S rRNA. Forms part of the Shine-Dalgarno cleft in the 70S ribosome. This Solidesulfovibrio magneticus (strain ATCC 700980 / DSM 13731 / RS-1) (Desulfovibrio magneticus) protein is Small ribosomal subunit protein uS11.